Reading from the N-terminus, the 168-residue chain is Transcription elongation factor GreB (168 aa).

Residues 61–84 (KKMLREIDSRVRFLRKRLENLKVV) are a coiled coil.

The protein belongs to the GreA/GreB family. GreB subfamily.

Its function is as follows. Necessary for efficient RNA polymerase transcription elongation past template-encoded arresting sites. The arresting sites in DNA have the property of trapping a certain fraction of elongating RNA polymerases that pass through, resulting in locked ternary complexes. Cleavage of the nascent transcript by cleavage factors such as GreA or GreB allows the resumption of elongation from the new 3'terminus. GreB releases sequences of up to 9 nucleotides in length. The protein is Transcription elongation factor GreB of Pseudomonas aeruginosa (strain ATCC 15692 / DSM 22644 / CIP 104116 / JCM 14847 / LMG 12228 / 1C / PRS 101 / PAO1).